The following is a 301-amino-acid chain: F1 operon positive regulatory protein (301 aa).

The 100-residue stretch at 8–107 (NSIIQYIEEN…GYTPRQYRMI (100 aa)) folds into the HTH araC/xylS-type domain. 2 consecutive DNA-binding regions (H-T-H motif) follow at residues 26 to 47 (DCLV…KEYV) and 74 to 97 (IIEI…KKIF).

In terms of biological role, positive regulator of F1 operon expression. The sequence is that of F1 operon positive regulatory protein (caf1R) from Yersinia pestis.